We begin with the raw amino-acid sequence, 161 residues long: DNA-directed RNA polymerase 18 kDa subunit (161 aa).

Belongs to the poxviridae DNA-directed RNA polymerase 18 kDa subunit family. In terms of assembly, the DNA-dependent RNA polymerase used for intermediate and late genes expression consists of eight subunits 147 kDa, 133 kDa, 35 kDa, 30 kDa, 22 kDa, 19 kDa, 18 kDa and 7 kDa totalling more than 500 kDa in mass. The same holoenzyme, with the addition of the transcription-specificity factor RAP94, is used for early gene expression.

It is found in the virion. It carries out the reaction RNA(n) + a ribonucleoside 5'-triphosphate = RNA(n+1) + diphosphate. Its function is as follows. Part of the DNA-dependent RNA polymerase which catalyzes the transcription of viral DNA into RNA using the four ribonucleoside triphosphates as substrates. Responsible for the transcription of early, intermediate and late genes. DNA-dependent RNA polymerase associates with the early transcription factor (ETF) thereby allowing the early genes transcription. Late transcription, and probably also intermediate transcription, require newly synthesized RNA polymerase. This is DNA-directed RNA polymerase 18 kDa subunit (RPO18) from Vertebrata (FPV).